The primary structure comprises 479 residues: MAAKKTTSKNTVNSANGFVFQILGPVVDVKFSEDNIPMIYDALVVDNNGVELVLEVEQHMGDEVVRTIAMGPTEGLAKGLPVINTNAPILAPVGDDVLGRMFNVTGHAIDEKPEFTGKRMPIHRDAPAYEELITNAEILETGIKVIDLMIPFAKGGKIGLFGGAGVGKTVLIQELINNIAKAHSGVSVFAGVGERTREGNDLYHEFIEAGVLDKTSLVFGQMNEPPGARMRVALTGLTIAEHFRDEKNMDVLLFIDNIFRFTQAGSEVSALLGRMPSAVGYQPTLSTEMGSLQERITSTNKGSITSVQAVYVPADDLTDPAPATTFTHLDAKIVLDRSIASLGIYPAVDPLSSSSRMLDPEIIGEEHYNVALGVQGTLQKYQDLQSIIAILGMDELSAEDKLIVQRARKIRNFLSQSFYVGEKFTGRPGQYVKVSDTVRSFKMILDGEMDDIPEILFLYKGTAEDVIQAYNETKVKNKK.

Position 162 to 169 (162 to 169 (GGAGVGKT)) interacts with ATP.

This sequence belongs to the ATPase alpha/beta chains family. As to quaternary structure, F-type ATPases have 2 components, CF(1) - the catalytic core - and CF(0) - the membrane proton channel. CF(1) has five subunits: alpha(3), beta(3), gamma(1), delta(1), epsilon(1). CF(0) has three main subunits: a(1), b(2) and c(9-12). The alpha and beta chains form an alternating ring which encloses part of the gamma chain. CF(1) is attached to CF(0) by a central stalk formed by the gamma and epsilon chains, while a peripheral stalk is formed by the delta and b chains.

It is found in the cell membrane. The enzyme catalyses ATP + H2O + 4 H(+)(in) = ADP + phosphate + 5 H(+)(out). Functionally, produces ATP from ADP in the presence of a proton gradient across the membrane. The catalytic sites are hosted primarily by the beta subunits. The protein is ATP synthase subunit beta of Mesoplasma florum (strain ATCC 33453 / NBRC 100688 / NCTC 11704 / L1) (Acholeplasma florum).